We begin with the raw amino-acid sequence, 90 residues long: Kunitz-type serine protease inhibitor C5 (90 aa).

The first 24 residues, 1-24, serve as a signal peptide directing secretion; sequence MSSGGLLLLLALLTLWAELTPISG. The BPTI/Kunitz inhibitor domain occupies 31–81; sequence CNLAPESGRCRGHLRRIYYNPDSNKCEVFFYGGCGGNDNNFETRKKCRQTC. 3 disulfides stabilise this stretch: Cys-31-Cys-81, Cys-40-Cys-64, and Cys-56-Cys-77. Residues 85-90 constitute a propeptide that is removed on maturation; it reads RKGRPT.

This sequence belongs to the venom Kunitz-type family. As to expression, expressed by the venom gland.

It localises to the secreted. Serine protease inhibitor that inhibits trypsin. In Daboia siamensis (Eastern Russel's viper), this protein is Kunitz-type serine protease inhibitor C5.